A 583-amino-acid polypeptide reads, in one-letter code: Chromosomal replication initiator protein DnaA (583 aa).

Residues 1-91 form a domain I, interacts with DnaA modulators region; that stretch reads MNAENLDPAT…SPMFPAFKVM (91 aa). Disordered regions lie at residues 86–179 and 197–232; these read PAFK…QQPV and VAGFGPSVAGTTAPQYPPQSEMQGSFTPGVTGNYRD. The segment at 91–235 is domain II; sequence MPPAQPEPQT…VTGNYRDPVT (145 aa). Polar residues predominate over residues 97–106; the sequence is EPQTTASPED. Basic and acidic residues-rich tracts occupy residues 126–135 and 147–174; these read EDSRTPRHSA and QEREDSAVHMARPDEQTAESHREPEHEP. Polar residues predominate over residues 205–226; the sequence is AGTTAPQYPPQSEMQGSFTPGV. The domain III, AAA+ region stretch occupies residues 236–460; it reads HLNSNDTFDT…GALKRVIAMA (225 aa). Gly-280, Gly-282, Lys-283, and Thr-284 together coordinate ATP. The tract at residues 461-583 is domain IV, binds dsDNA; sequence SLNHQPVTRA…TVELKQHLND (123 aa).

The protein belongs to the DnaA family. Oligomerizes as a right-handed, spiral filament on DNA at oriC.

The protein localises to the cytoplasm. In terms of biological role, plays an essential role in the initiation and regulation of chromosomal replication. ATP-DnaA binds to the origin of replication (oriC) to initiate formation of the DNA replication initiation complex once per cell cycle. Binds the DnaA box (a 9 base pair repeat at the origin) and separates the double-stranded (ds)DNA. Forms a right-handed helical filament on oriC DNA; dsDNA binds to the exterior of the filament while single-stranded (ss)DNA is stabiized in the filament's interior. The ATP-DnaA-oriC complex binds and stabilizes one strand of the AT-rich DNA unwinding element (DUE), permitting loading of DNA polymerase. After initiation quickly degrades to an ADP-DnaA complex that is not apt for DNA replication. Binds acidic phospholipids. This chain is Chromosomal replication initiator protein DnaA, found in Bifidobacterium animalis subsp. lactis (strain AD011).